The chain runs to 466 residues: Cysteine--tRNA ligase (466 aa).

Cys-28 serves as a coordination point for Zn(2+). The 'HIGH' region motif lies at 30–40 (PTVYNFFHIGN). Zn(2+) is bound by residues Cys-208, His-233, and Glu-237. Residues 265-269 (KMSKS) carry the 'KMSKS' region motif. Lys-268 provides a ligand contact to ATP.

The protein belongs to the class-I aminoacyl-tRNA synthetase family. Monomer. Requires Zn(2+) as cofactor.

It localises to the cytoplasm. It catalyses the reaction tRNA(Cys) + L-cysteine + ATP = L-cysteinyl-tRNA(Cys) + AMP + diphosphate. The chain is Cysteine--tRNA ligase from Clostridium perfringens (strain ATCC 13124 / DSM 756 / JCM 1290 / NCIMB 6125 / NCTC 8237 / Type A).